The following is a 353-amino-acid chain: Putative permease PerM (353 aa).

7 consecutive transmembrane segments (helical) span residues 19 to 39, 72 to 92, 156 to 176, 217 to 237, 240 to 260, 281 to 301, and 310 to 330; these read IALLVILVAGFGIIFFFSGLL, IVLVVFVGILLLMAFVVLPIA, LVGLLTIAVYLVLVPLMVFFL, VLEMIVVGIATWLGFLLFGLN, LLLAVLVGFSVLIPYIGAFVV, CFAVYLIIQALDGNLLVPVLF, and LVIILSVVIFGGLWGFWGVFF.

This sequence belongs to the autoinducer-2 exporter (AI-2E) (TC 2.A.86) family.

It is found in the cell membrane. In Escherichia coli O157:H7, this protein is Putative permease PerM (perM).